A 430-amino-acid polypeptide reads, in one-letter code: MESKWLTVDTKHLYGFDEAIFIQKYQKKVNQIHQQFLNQQLPDGHMNGWYSQPDQDHKGLLKQINTIAKQFNALKVTDIVYLGIGGSYTGIRAILDFLKPEQKANIKVHFVPDISAFNIAAVARAIKGKSWALVVTSKSGRTLEPAVTFRYFRNLLHKQYKQKHALRTVVITDAVKGLLVGMSNQYGYAHLTIPSNIGGRFSTLSPAGLLLAKLCGHDPKQLLLGTLTAKQELANSDLNTNSAYYYAALRHWLYTTKKLKIEVTVAYHSAYEYLLLQHRQLFGESEGKGGKSLFPTFSLFTTDLHSMGQLYQEGEKNFFETVIQVQTQFHDLELPPSDFNNDDQLDYLLAKSMNEISNTALEAVVEAHFQSNVNIIKLTLKERTTFMFGYFYFWLSMATMMSGSLLGHNVFDQPGVEVYKQLMFAKLGRE.

The active-site Proton donor is E284. Catalysis depends on residues H305 and K420.

The protein belongs to the GPI family.

It is found in the cytoplasm. The enzyme catalyses alpha-D-glucose 6-phosphate = beta-D-fructose 6-phosphate. Its pathway is carbohydrate biosynthesis; gluconeogenesis. It functions in the pathway carbohydrate degradation; glycolysis; D-glyceraldehyde 3-phosphate and glycerone phosphate from D-glucose: step 2/4. In terms of biological role, catalyzes the reversible isomerization of glucose-6-phosphate to fructose-6-phosphate. The protein is Glucose-6-phosphate isomerase of Mycoplasma pneumoniae (strain ATCC 29342 / M129 / Subtype 1) (Mycoplasmoides pneumoniae).